The sequence spans 1378 residues: Disease resistance protein RRS1 (1378 aa).

A TIR domain is found at 5-146 (EKDEEFVCIS…EIVRDVYETH (142 aa)). The NB-ARC domain occupies 170–421 (IGIRCVGIWG…LLEGCGFFPH (252 aa)). Residue 179-186 (GMPGIGKT) coordinates ATP. LRR repeat units lie at residues 498 to 522 (SEEIEGLFLDTSNLRFDLQPSAFKN), 535 to 553 (NPEVHPVINFPTGSLHSLP), 554 to 575 (NELRLLHWENYPLKSLPQNFDP), 577 to 598 (HLVEINMPYSQLQKLWGGTKNL), 621 to 646 (AENLEVIDLQGCTRLQNFPAAGRLLR), 665 to 688 (PPNIEKLHLQGTGILALPVSTVKP), 742 to 766 (LPNMANLDLNVLDLSGCSSLNSIQG), 768 to 793 (PRFLKQLYLGGTAIREVPQLPQSLEI), and 831 to 854 (PRNLKELYFAGTTLREVPQLPLSL). The Nuclear localization signal motif lies at 988–1005 (RNFHCWAPGKVVPKVRKD). Positions 1204–1272 (IPAIDEGDLW…YLSEHNHPRP (69 aa)) form a DNA-binding region, WRKY. A disordered region spans residues 1300–1321 (RVFQNKDEPNQPHLPSSSTPPR).

Interacts with PopP2, a R.solanacearum type III effector.

Its subcellular location is the nucleus. It localises to the cytoplasm. Functionally, transcription factor. Interacts specifically with the W box (5'-(T)TGAC[CT]-3'), a frequently occurring elicitor-responsive cis-acting element. Also acts as a disease resistance protein involved in resistance to fungal and bacterial pathogens, including R.solanacearum, P.syringae pv. tomato and C.higginsianum. RRS1 mediated resistance depends on salicylic acid and NDR1 (AC O48915). This Arabidopsis thaliana (Mouse-ear cress) protein is Disease resistance protein RRS1.